Consider the following 257-residue polypeptide: Small ribosomal subunit protein uS15m (257 aa).

A mitochondrion-targeting transit peptide spans 1–57; sequence MLRVAWRTLSLIRTRAVTQVLVPGLPGGGSAKFPFNQWGLQPRSLLLQAARGYVVRK. Residues 225 to 257 are disordered; that stretch reads RALKAAAAAQKQAKRRNPDSPAKAIPKTLKDSQ.

This sequence belongs to the universal ribosomal protein uS15 family. Component of the mitochondrial small ribosomal subunit (mt-SSU). Mature mammalian 55S mitochondrial ribosomes consist of a small (28S) and a large (39S) subunit. The 28S small subunit contains a 12S ribosomal RNA (12S mt-rRNA) and 30 different proteins. The 39S large subunit contains a 16S rRNA (16S mt-rRNA), a copy of mitochondrial valine transfer RNA (mt-tRNA(Val)), which plays an integral structural role, and 52 different proteins. Interacts with METTL17.

It is found in the mitochondrion matrix. This is Small ribosomal subunit protein uS15m (MRPS15) from Homo sapiens (Human).